Here is a 401-residue protein sequence, read N- to C-terminus: NADH-quinone oxidoreductase subunit D (401 aa).

The protein belongs to the complex I 49 kDa subunit family. As to quaternary structure, NDH-1 is composed of 15 different subunits. Subunits NuoB, C, D, E, F, and G constitute the peripheral sector of the complex.

It localises to the cell membrane. It carries out the reaction a quinone + NADH + 5 H(+)(in) = a quinol + NAD(+) + 4 H(+)(out). In terms of biological role, NDH-1 shuttles electrons from NADH, via FMN and iron-sulfur (Fe-S) centers, to quinones in the respiratory chain. The immediate electron acceptor for the enzyme in this species is believed to be a menaquinone. Couples the redox reaction to proton translocation (for every two electrons transferred, four hydrogen ions are translocated across the cytoplasmic membrane), and thus conserves the redox energy in a proton gradient. This chain is NADH-quinone oxidoreductase subunit D, found in Deinococcus radiodurans (strain ATCC 13939 / DSM 20539 / JCM 16871 / CCUG 27074 / LMG 4051 / NBRC 15346 / NCIMB 9279 / VKM B-1422 / R1).